A 458-amino-acid chain; its full sequence is UDP-N-acetylmuramate--L-alanine ligase (458 aa).

118–124 (GTHGKTT) serves as a coordination point for ATP.

The protein belongs to the MurCDEF family.

The protein localises to the cytoplasm. The enzyme catalyses UDP-N-acetyl-alpha-D-muramate + L-alanine + ATP = UDP-N-acetyl-alpha-D-muramoyl-L-alanine + ADP + phosphate + H(+). It participates in cell wall biogenesis; peptidoglycan biosynthesis. Cell wall formation. In Clostridium botulinum (strain Langeland / NCTC 10281 / Type F), this protein is UDP-N-acetylmuramate--L-alanine ligase.